A 160-amino-acid polypeptide reads, in one-letter code: Cyclic pyranopterin monophosphate synthase (160 aa).

Substrate is bound by residues 76–78 and 114–115; these read LCH and ME. The active site involves D129.

It belongs to the MoaC family. In terms of assembly, homohexamer; trimer of dimers.

It catalyses the reaction (8S)-3',8-cyclo-7,8-dihydroguanosine 5'-triphosphate = cyclic pyranopterin phosphate + diphosphate. It participates in cofactor biosynthesis; molybdopterin biosynthesis. Catalyzes the conversion of (8S)-3',8-cyclo-7,8-dihydroguanosine 5'-triphosphate to cyclic pyranopterin monophosphate (cPMP). The chain is Cyclic pyranopterin monophosphate synthase from Saccharophagus degradans (strain 2-40 / ATCC 43961 / DSM 17024).